We begin with the raw amino-acid sequence, 149 residues long: Transcription factor Atoh7 (149 aa).

The region spanning 41 to 93 is the bHLH domain; that stretch reads RRRLAANARERRRMQGLNTAFDRLRRVVPQWGQDKKLSKYETLQMALSYIIAL.

In terms of assembly, forms a heterodimer with TCF3 isoform E47; interaction may be required for DNA-binding in certain situations. Expressed in retinal ganglion cells. Expressed in the cerebellum, trapezoid body, ventral nucleus of the lateral lamniscus and in areas of the auditory hindbrain such as the cochlear nucleus, lateral superior olive and medial nucleus of the trapezoid body. Expressed in the modiolar nerve root and in the cochlear in a small group of bushy neurons within the acoustic nerve. Expressed weakly in the sensory epithelia of the saccule and utricle.

The protein resides in the nucleus. It is found in the perikaryon. Its subcellular location is the cell projection. It localises to the axon. In terms of biological role, transcription factor that binds to DNA at the consensus sequence 5'-CAG[GC]TG-3'. Dimerization with TCF3 isoform E47 may be required in certain situations. Binds to gene promoters and enhancer elements, and thereby regulates a transcriptional program of retinal ganglion cell (RGC) determinant genes. Although the exact mechanism is not certain, retinal transcription regulation by ATOH7 has a role in RGC determination and survival, photoreceptor population development, targeting of RGC axons to the optic nerve and development of the retino-hypothalamic tract. Binds to its own promoter and enhancer sequences, suggesting autoregulation of ATOH7 transcription. Required for retinal circadian rhythm photoentrainment. Plays a role in brainstem auditory signaling and binaural processing. The chain is Transcription factor Atoh7 from Mus musculus (Mouse).